We begin with the raw amino-acid sequence, 170 residues long: Translationally-controlled tumor protein homolog (170 aa).

The 170-residue stretch at 1 to 170 (MIIYKDLLSG…FKDGLEIEKC (170 aa)) folds into the TCTP domain.

The protein belongs to the TCTP family.

Its subcellular location is the cytoplasm. In terms of biological role, involved in calcium binding and microtubule stabilization. The polypeptide is Translationally-controlled tumor protein homolog (tpt1) (Scophthalmus maximus (Turbot)).